Here is a 415-residue protein sequence, read N- to C-terminus: Histidine--tRNA ligase (415 aa).

This sequence belongs to the class-II aminoacyl-tRNA synthetase family. As to quaternary structure, homodimer.

The protein resides in the cytoplasm. The catalysed reaction is tRNA(His) + L-histidine + ATP = L-histidyl-tRNA(His) + AMP + diphosphate + H(+). The chain is Histidine--tRNA ligase from Clostridium botulinum (strain 657 / Type Ba4).